A 224-amino-acid chain; its full sequence is 2-C-methyl-D-erythritol 4-phosphate cytidylyltransferase (224 aa).

This sequence belongs to the IspD/TarI cytidylyltransferase family. IspD subfamily.

It carries out the reaction 2-C-methyl-D-erythritol 4-phosphate + CTP + H(+) = 4-CDP-2-C-methyl-D-erythritol + diphosphate. It functions in the pathway isoprenoid biosynthesis; isopentenyl diphosphate biosynthesis via DXP pathway; isopentenyl diphosphate from 1-deoxy-D-xylulose 5-phosphate: step 2/6. In terms of biological role, catalyzes the formation of 4-diphosphocytidyl-2-C-methyl-D-erythritol from CTP and 2-C-methyl-D-erythritol 4-phosphate (MEP). The chain is 2-C-methyl-D-erythritol 4-phosphate cytidylyltransferase from Clostridium botulinum (strain Eklund 17B / Type B).